The chain runs to 909 residues: SCY1-like protein 2 B (909 aa).

The 305-residue stretch at 39–343 (YELLDQIGSA…ALDFTGSNFF (305 aa)) folds into the Protein kinase domain. HEAT repeat units lie at residues 311–348 (SIPSELVSDLQRMLSTNESFRPTALDFTGSNFFRSDAR), 350–382 (RALRFLDHLLERDNMQKSEFLKALSDMWKDFDS), 383–401 (RVLRYKVLPPLCAELRNLV), 402–439 (LQPIILPMVLTIAQSQDRTDFELITLPALVPVLSTASG), 465–502 (VLPLLLRAYNDNDVRIQEEVLKRSTSVAKQLDGQVVRQ), 499–537 (VVRQAILPRVHGLALKTTVAAVRVNALLCLAELVQTLDK), and 578–617 (FTAEHVLTLMMPLLTAQQLNVQQFAKYMLFVKDILRKIEE). Disordered regions lie at residues 624-772 (NDSG…VAST) and 804-909 (SASL…LDLL). Polar residues-rich tracts occupy residues 638–648 (NGLQFQSSTQI), 678–712 (PASSRHNTNDQFNKSTDQSQPSIMSTLPNKTTAPT), 724–747 (RQSSSLTAPATDNQTQLNTGTSFA), 804–828 (SASLSSLKPPQQGNQGISANNQDPL), and 835–852 (KQSQGMPSFTSGSYNNQK).

It belongs to the protein kinase superfamily. Interacts with VTI11, VTI12 and CHC1. In terms of tissue distribution, expressed in roots, seedlings, leaves, stems, flowers, and, at low levels, in siliques.

It localises to the golgi apparatus membrane. It is found in the golgi apparatus. The protein resides in the trans-Golgi network membrane. The protein localises to the prevacuolar compartment membrane. Probably inactive kinase. Component of the AP2-containing clathrin coat that regulates clathrin-dependent trafficking at plasma membrane, TGN and endosomal system. Together with SCYL2B, required for cell growth, plant growth and development. Essential for polarized root hair development probably by mediating the root hair tip localization of cellulose synthase-like D3 (CSLD3). The sequence is that of SCY1-like protein 2 B from Arabidopsis thaliana (Mouse-ear cress).